An 86-amino-acid polypeptide reads, in one-letter code: Small ribosomal subunit protein bS18 (86 aa).

This sequence belongs to the bacterial ribosomal protein bS18 family. As to quaternary structure, part of the 30S ribosomal subunit. Forms a tight heterodimer with protein bS6.

Binds as a heterodimer with protein bS6 to the central domain of the 16S rRNA, where it helps stabilize the platform of the 30S subunit. This Herpetosiphon aurantiacus (strain ATCC 23779 / DSM 785 / 114-95) protein is Small ribosomal subunit protein bS18.